We begin with the raw amino-acid sequence, 199 residues long: Large ribosomal subunit protein bL25 (199 aa).

This sequence belongs to the bacterial ribosomal protein bL25 family. CTC subfamily. Part of the 50S ribosomal subunit; part of the 5S rRNA/L5/L18/L25 subcomplex. Contacts the 5S rRNA. Binds to the 5S rRNA independently of L5 and L18.

Functionally, this is one of the proteins that binds to the 5S RNA in the ribosome where it forms part of the central protuberance. This is Large ribosomal subunit protein bL25 from Nostoc punctiforme (strain ATCC 29133 / PCC 73102).